The sequence spans 264 residues: Glutamate racemase (264 aa).

Substrate-binding positions include 10 to 11 (DS) and 42 to 43 (YG). The active-site Proton donor/acceptor is the cysteine 73. Residue 74-75 (NT) participates in substrate binding. The active-site Proton donor/acceptor is cysteine 183. Position 184–185 (184–185 (TH)) interacts with substrate.

This sequence belongs to the aspartate/glutamate racemases family.

The catalysed reaction is L-glutamate = D-glutamate. Its pathway is cell wall biogenesis; peptidoglycan biosynthesis. Provides the (R)-glutamate required for cell wall biosynthesis. The sequence is that of Glutamate racemase from Streptococcus pyogenes serotype M18 (strain MGAS8232).